Reading from the N-terminus, the 156-residue chain is 6,7-dimethyl-8-ribityllumazine synthase (156 aa).

5-amino-6-(D-ribitylamino)uracil contacts are provided by residues F23, 57–59 (AFE), and 81–83 (AVI). 86–87 (AT) is a (2S)-2-hydroxy-3-oxobutyl phosphate binding site. The Proton donor role is filled by H89. N114 lines the 5-amino-6-(D-ribitylamino)uracil pocket. R128 contacts (2S)-2-hydroxy-3-oxobutyl phosphate.

The protein belongs to the DMRL synthase family.

It catalyses the reaction (2S)-2-hydroxy-3-oxobutyl phosphate + 5-amino-6-(D-ribitylamino)uracil = 6,7-dimethyl-8-(1-D-ribityl)lumazine + phosphate + 2 H2O + H(+). It functions in the pathway cofactor biosynthesis; riboflavin biosynthesis; riboflavin from 2-hydroxy-3-oxobutyl phosphate and 5-amino-6-(D-ribitylamino)uracil: step 1/2. Functionally, catalyzes the formation of 6,7-dimethyl-8-ribityllumazine by condensation of 5-amino-6-(D-ribitylamino)uracil with 3,4-dihydroxy-2-butanone 4-phosphate. This is the penultimate step in the biosynthesis of riboflavin. This chain is 6,7-dimethyl-8-ribityllumazine synthase, found in Aliarcobacter butzleri (strain RM4018) (Arcobacter butzleri).